The following is a 65-amino-acid chain: MNNKNLINDVKVTQVKSSIGRKYDQKLTLIGLGLNKINKSVVLKNTDSVQGMLKKVEHLLKIENV.

Belongs to the universal ribosomal protein uL30 family. As to quaternary structure, part of the 50S ribosomal subunit.

This is Large ribosomal subunit protein uL30 from Rickettsia bellii (strain OSU 85-389).